A 483-amino-acid chain; its full sequence is Protein adenylyltransferase Fic (483 aa).

Residues 20 to 42 (AFFFIAGSLATFVFHALTSSSSV) traverse the membrane as a helical segment. TPR repeat units follow at residues 107–140 (ALGAMRLALDMHISGKDDKAARLFEHALALAPKH) and 141–175 (PEVLLRYGEFLEHNQRNIVLADQYYFQALSISPSN). The short motif at 232–237 (SVGIEG) is the Inhibitory (S/T)XXXE(G/N) motif element. ATP-binding positions include glutamate 236 and 317–320 (VGGH). The Fido domain maps to 286–421 (ITLKDILELH…IRPFVRFIAD (136 aa)). Residue histidine 364 is part of the active site. ATP is bound by residues 368–375 (DGNGRTSR), 400–401 (YY), and asparagine 408. Residues 464–483 (SAPEPYESGSGLDSGVNGMP) are disordered.

Belongs to the fic family. Homodimer.

The protein localises to the membrane. It carries out the reaction L-tyrosyl-[protein] + ATP = O-(5'-adenylyl)-L-tyrosyl-[protein] + diphosphate. It catalyses the reaction L-threonyl-[protein] + ATP = 3-O-(5'-adenylyl)-L-threonyl-[protein] + diphosphate. The catalysed reaction is 3-O-(5'-adenylyl)-L-threonyl-[protein] + H2O = L-threonyl-[protein] + AMP + H(+). With respect to regulation, the side chain of Glu-236 determines which of the two opposing activities (AMPylase or de-AMPylase) will take place. In response to endoplasmic reticulum stress, mediates de-AMPylase activity. Adenylyltransferase activity is inhibited by the inhibitory helix present at the N-terminus: Glu-236 binds ATP and competes with ATP-binding at Arg-375, thereby preventing adenylyltransferase activity. In unstressed cells, disengagement of Glu-236 promotes adenylyltransferase activity. Activation dissociates ATP-binding from Glu-236, allowing ordered binding of the entire ATP moiety with the alpha-phosphate in an orientation that is productive for accepting an incoming target hydroxyl side chain. Protein that can both mediate the addition of adenosine 5'-monophosphate (AMP) to specific residues of target proteins (AMPylation), and the removal of the same modification from target proteins (de-AMPylation), depending on the context. The side chain of Glu-236 determines which of the two opposing activities (AMPylase or de-AMPylase) will take place. Acts as a key regulator of the unfolded protein response (UPR) by mediating AMPylation or de-AMPylation of Hsc70-3/BiP. In unstressed cells, acts as an adenylyltransferase by mediating AMPylation of Hsc70-3/BiP at 'Thr-518', thereby inactivating it. In response to endoplasmic reticulum stress, acts as a phosphodiesterase by mediating removal of ATP (de-AMPylation) from Hsc70-3/BiP at 'Thr-518', leading to restore HSPA5/BiP activity. This is Protein adenylyltransferase Fic from Drosophila grimshawi (Hawaiian fruit fly).